A 468-amino-acid polypeptide reads, in one-letter code: Glycine--tRNA ligase (468 aa).

2 residues coordinate substrate: R101 and E170. ATP contacts are provided by residues 202–204 (RNE), 212–217 (FRTREF), 289–290 (EL), and 333–336 (GLTR). A substrate-binding site is contributed by 217–221 (FEQME). Substrate is bound at residue 329–333 (EPAAG).

Belongs to the class-II aminoacyl-tRNA synthetase family. Homodimer.

The protein localises to the cytoplasm. It carries out the reaction tRNA(Gly) + glycine + ATP = glycyl-tRNA(Gly) + AMP + diphosphate. Functionally, catalyzes the attachment of glycine to tRNA(Gly). In Mycolicibacterium vanbaalenii (strain DSM 7251 / JCM 13017 / BCRC 16820 / KCTC 9966 / NRRL B-24157 / PYR-1) (Mycobacterium vanbaalenii), this protein is Glycine--tRNA ligase.